A 330-amino-acid polypeptide reads, in one-letter code: Small ribosomal subunit protein mS35 (330 aa).

Positions 50 to 73 (AAGKGVRGQMKPRRQAGEPRTERM) are disordered. Residues 64-73 (QAGEPRTERM) are compositionally biased toward basic and acidic residues.

The protein belongs to the mitochondrion-specific ribosomal protein mS35 family. In terms of assembly, component of the mitochondrial ribosome small subunit (28S) which comprises a 12S rRNA and about 30 distinct proteins.

The protein resides in the mitochondrion. This is Small ribosomal subunit protein mS35 (mrps35) from Danio rerio (Zebrafish).